The following is a 1026-amino-acid chain: Phosphoenolpyruvate carboxylase (1026 aa).

Active-site residues include histidine 199 and lysine 672.

Belongs to the PEPCase type 1 family. It depends on Mg(2+) as a cofactor.

It carries out the reaction oxaloacetate + phosphate = phosphoenolpyruvate + hydrogencarbonate. Its function is as follows. Forms oxaloacetate, a four-carbon dicarboxylic acid source for the tricarboxylic acid cycle. The polypeptide is Phosphoenolpyruvate carboxylase (ppc) (Nostoc sp. (strain PCC 7120 / SAG 25.82 / UTEX 2576)).